Reading from the N-terminus, the 195-residue chain is Recombination protein RecR (195 aa).

Residues 53–68 form a C4-type zinc finger; the sequence is CPVCFNIDVKSPCSIC. Residues 76–171 form the Toprim domain; it reads QLLCIVEELG…KVTRLACGIP (96 aa).

This sequence belongs to the RecR family.

May play a role in DNA repair. It seems to be involved in an RecBC-independent recombinational process of DNA repair. It may act with RecF and RecO. The polypeptide is Recombination protein RecR (Ehrlichia chaffeensis (strain ATCC CRL-10679 / Arkansas)).